Consider the following 735-residue polypeptide: Polycomb protein sop-2 (735 aa).

A compositionally biased stretch (polar residues) spans 1–15 (MSSNLTSNEMSSTSA). 3 disordered regions span residues 1 to 59 (MSSN…SSSS), 223 to 288 (AARS…APAA), and 300 to 534 (PQES…PVLQ). Residues 224 to 503 (ARSSRMAARR…APATPATPAS (280 aa)) are RNA-binding. The span at 239–288 (YRGAFRGAARGAPSRRPAPAAEVAPETPVAAPMAPAAPAAPATPEAAPAA) shows a compositional bias: low complexity. Basic and acidic residues-rich tracts occupy residues 317-355 (DTSK…DGGR) and 389-398 (RAAEKKKPED). The segment covering 399–413 (SDAAEEQEVEMEVDN) has biased composition (acidic residues). Residues 450 to 470 (VEPKKEPVDEPAEKIPKRSEA) are compositionally biased toward basic and acidic residues. Low complexity predominate over residues 471 to 504 (APEVPATATTKEAPPSTSSSPPDAPATPATPASS). Positions 520–534 (LTGSPPESETPPVLQ) are enriched in polar residues. Residues 621–712 (LVENNHEATL…YGTEVLNHYR (92 aa)) form an SAM-like region.

Homodimer. Interacts with ubc-9. Binds through its N-terminal region to the N-terminal region of sor-1. Sumoylated by ubc-9. Sumoylation is required for the transcriptional regulation of homeotic genes. As to expression, widely expressed. Weakly expressed in most somatic cells of 50-cell stage embryos. At 200 cell stage, it is strongly expressed. By comma stage, it is expressed in most somatic cells.

It is found in the nucleus. In terms of biological role, polycomb group (PcG) protein. PcG proteins act by forming multiprotein complexes, which are required to maintain the transcriptionally repressive state of homeotic genes throughout development. PcG proteins are not required to initiate repression, but to maintain it during later stages of development. Also required to repress expression of other genes and for localization of sor-1. Binds RNA. This chain is Polycomb protein sop-2 (sop-2), found in Caenorhabditis elegans.